Reading from the N-terminus, the 238-residue chain is Sugar fermentation stimulation protein homolog (238 aa).

Belongs to the SfsA family.

The chain is Sugar fermentation stimulation protein homolog from Bartonella tribocorum (strain CIP 105476 / IBS 506).